We begin with the raw amino-acid sequence, 689 residues long: Elongation factor G (689 aa).

A tr-type G domain is found at 8 to 282 (DKVRNIGIMA…AIVRYLPSPL (275 aa)). GTP-binding positions include 17–24 (AHIDAGKT), 81–85 (DTPGH), and 135–138 (NKMD).

The protein belongs to the TRAFAC class translation factor GTPase superfamily. Classic translation factor GTPase family. EF-G/EF-2 subfamily.

Its subcellular location is the cytoplasm. Functionally, catalyzes the GTP-dependent ribosomal translocation step during translation elongation. During this step, the ribosome changes from the pre-translocational (PRE) to the post-translocational (POST) state as the newly formed A-site-bound peptidyl-tRNA and P-site-bound deacylated tRNA move to the P and E sites, respectively. Catalyzes the coordinated movement of the two tRNA molecules, the mRNA and conformational changes in the ribosome. This is Elongation factor G from Thermoanaerobacter pseudethanolicus (strain ATCC 33223 / 39E) (Clostridium thermohydrosulfuricum).